A 357-amino-acid polypeptide reads, in one-letter code: Chaperone protein DnaJ (357 aa).

One can recognise a J domain in the interval 4–69 (DYYAILGVDR…QKRKQYDETG (66 aa)). The segment at 132-213 (GASKNVKYRR…CHGTGTVSKN (82 aa)) adopts a CR-type zinc-finger fold. Positions 145, 148, 161, 164, 187, 190, 201, and 204 each coordinate Zn(2+). 4 CXXCXGXG motif repeats span residues 145–152 (CEHCSGTG), 161–168 (CPTCHGSG), 187–194 (CRTCHGRG), and 201–208 (CTVCHGTG).

It belongs to the DnaJ family. As to quaternary structure, homodimer. It depends on Zn(2+) as a cofactor.

It is found in the cytoplasm. In terms of biological role, participates actively in the response to hyperosmotic and heat shock by preventing the aggregation of stress-denatured proteins and by disaggregating proteins, also in an autonomous, DnaK-independent fashion. Unfolded proteins bind initially to DnaJ; upon interaction with the DnaJ-bound protein, DnaK hydrolyzes its bound ATP, resulting in the formation of a stable complex. GrpE releases ADP from DnaK; ATP binding to DnaK triggers the release of the substrate protein, thus completing the reaction cycle. Several rounds of ATP-dependent interactions between DnaJ, DnaK and GrpE are required for fully efficient folding. Also involved, together with DnaK and GrpE, in the DNA replication of plasmids through activation of initiation proteins. The polypeptide is Chaperone protein DnaJ (Picrophilus torridus (strain ATCC 700027 / DSM 9790 / JCM 10055 / NBRC 100828 / KAW 2/3)).